We begin with the raw amino-acid sequence, 230 residues long: Cytidylate kinase (230 aa).

Position 12 to 20 (12 to 20 (GPSGAGKGT)) interacts with ATP.

The protein belongs to the cytidylate kinase family. Type 1 subfamily.

It localises to the cytoplasm. It carries out the reaction CMP + ATP = CDP + ADP. The catalysed reaction is dCMP + ATP = dCDP + ADP. The protein is Cytidylate kinase of Yersinia enterocolitica serotype O:8 / biotype 1B (strain NCTC 13174 / 8081).